The following is a 550-amino-acid chain: Sterol O-acyltransferase 1 (550 aa).

N-acetylmethionine is present on methionine 1. The disordered stretch occupies residues 1 to 36 (MVGEEKMSLRNRLSKSRENPEEDEDQRKPAKESLEA). Over 1–138 (MVGEEKMSLR…LDELLEVDHI (138 aa)) the chain is Cytoplasmic. The residue at position 8 (serine 8) is a Phosphoserine. Basic and acidic residues predominate over residues 15-34 (KSRENPEEDEDQRKPAKESL). A cholesterol-binding site is contributed by histidine 137. Residues 139–160 (RTIYHMFIALLILFILSTLVVD) form a helical membrane-spanning segment. Residues 161–180 (YIDEGRLVLEFSLLSYAFGK) are Lumenal-facing. The helical transmembrane segment at 181-206 (FPTVVWTWWIMFLSTFSVPYFLFQRW) threads the bilayer. The Cytoplasmic portion of the chain corresponds to 207 to 218 (ATGYSKSSHPLI). Residues 219–244 (NSLFHGFLFMVFQIGILGFGPTYVVL) form a helical membrane-spanning segment. Topologically, residues 245-252 (AYTLPPAS) are lumenal. Residues 253-276 (RFIIIFEQIRFVMKAHSFVRENVP) form a helical membrane-spanning segment. Over 277–319 (RVLNSAKEKSSTVPIPTVNQYLYFLFAPTLIYRDSYPRNPTVR) the chain is Cytoplasmic. Residues 320–352 (WGYVAMQFAQVFGCFFYVYYIFERLCAPLFRNI) traverse the membrane as a helical segment. Residues 353-369 (KQEPFSARVLVLCVFNS) are Lumenal-facing. Residues 370-395 (ILPGVLILFLTFFAFLHCWLNAFAEM) traverse the membrane as a helical segment. The Cytoplasmic segment spans residues 396-443 (LRFGDRMFYKDWWNSTSYSNYYRTWNVVVHDWLYYYAYKDFLWFFSKR). Positions 403 to 409 (FYKDWWN) match the FYXDWWN motif motif. The an acyl-CoA site is built by asparagine 415, arginine 418, asparagine 421, histidine 425, tyrosine 433, lysine 445, and serine 456. The chain crosses the membrane as a helical span at residues 444–468 (FKSAAMLAVFAVSAVVHEYALAVCL). The active site involves histidine 460. Residues 469–474 (SFFYPV) lie on the Lumenal side of the membrane. The helical transmembrane segment at 475–490 (LFVLFMFFGMAFNFIV) threads the bilayer. Residues 491–496 (NDSRKK) are Cytoplasmic-facing. The helical transmembrane segment at 497-528 (PIWNVMMWTSLFLGNGVLLCFYSQEWYARQHC) threads the bilayer. Cysteines 528 and 546 form a disulfide. Residues 529 to 550 (PLKNPTFLDYVRPRSWTCRYVF) lie on the Lumenal side of the membrane.

Belongs to the membrane-bound acyltransferase family. Sterol o-acyltransferase subfamily. In terms of assembly, may form homo- or heterodimers. Interacts with UBIAD1. Expressed in most tissues, but most strongly in the adrenal gland. Expressed more strongly in liver Kupffer cells than in hepatocytes.

It is found in the endoplasmic reticulum membrane. The enzyme catalyses a sterol + a long-chain fatty acyl-CoA = a long-chain 3-hydroxysterol ester + CoA. It catalyses the reaction cholesterol + an acyl-CoA = a cholesterol ester + CoA. The catalysed reaction is cholesterol + (9Z)-octadecenoyl-CoA = cholesteryl (9Z-octadecenoate) + CoA. It carries out the reaction cholesterol + hexadecanoyl-CoA = cholesteryl hexadecanoate + CoA. The enzyme catalyses octadecanoyl-CoA + cholesterol = cholesteryl octadecanoate + CoA. It catalyses the reaction (9Z,12Z)-octadecadienoyl-CoA + cholesterol = cholesteryl (9Z,12Z)-octadecadienoate + CoA. The catalysed reaction is (5Z,8Z,11Z,14Z)-eicosatetraenoyl-CoA + cholesterol = cholesteryl (5Z,8Z,11Z,14Z)-eicosatetraenoate + CoA. It carries out the reaction (9Z)-hexadecenoyl-CoA + cholesterol = cholesteryl (9Z)-hexadecenoate + CoA. The enzyme catalyses (11Z)-octadecenoyl-CoA + cholesterol = cholesteryl (11Z)-octadecenoate + CoA. It catalyses the reaction (7Z)-octadecenoyl-CoA + cholesterol = cholesteryl (7Z)-octadecenoate + CoA. Catalyzes the formation of fatty acid-cholesterol esters, which are less soluble in membranes than cholesterol. Plays a role in lipoprotein assembly and dietary cholesterol absorption. Preferentially utilizes oleoyl-CoA ((9Z)-octadecenoyl-CoA) as a substrate: shows a higher activity towards an acyl-CoA substrate with a double bond at the delta-9 position (9Z) than towards saturated acyl-CoA or an unsaturated acyl-CoA with a double bond at the delta-7 (7Z) or delta-11 (11Z) positions. This is Sterol O-acyltransferase 1 (SOAT1) from Chlorocebus aethiops (Green monkey).